A 526-amino-acid chain; its full sequence is MELTLWTYEGPPHVGAMRVASSMKEIHYVLHAPQGDTYADLLFTMIERRGKRPPVTYTTFQARDLGGDTAELVKRNISEAVERFKPKTLLIGESCTAELIQDQPGALAKGMGFNIPIVNLELPAYSKKENWGASETFYQIIRTLLNDKTNEINNINPQRWKSLGRRPKVNILGPTLLGFRCRDDVIEIQRILSEQGIDTNVVAPLGSSPDDIKRLIDADINICLYQEIAETSCEWLKRKCGMEFTTTIPIGIKNTINFINEVHDKLGLPLTNKEELEHKSKLPWYSKSIDSNYLTGKRVFIFGDGTHAIAAAKIAKDELGFEVVGLGTYSREMARQVRAAAKDLNIEALITNSYLEVEDAMKKASPELVLGTQMERHSAKRLGIPCSVISTPMHVQDVPARYSPQMGWEGANVIFDDWVHPLMMGLEEHLIDMFKHDFEFVDGHQSHLGHTATKGLDNIEDEHGLKNDTLKKNGGVLWTESGRAELTKVPFFVRGKVKSNTEKYALSKGLPEISDETLYDAKAYFS.

Asp36 is a binding site for [4Fe-4S] cluster. Asp290 serves as the catalytic Proton donor. 425-426 (GL) provides a ligand contact to substrate.

It belongs to the ChlB/BchB/BchZ family. In terms of assembly, protochlorophyllide reductase is composed of three subunits; ChlL, ChlN and ChlB. Forms a heterotetramer of two ChlB and two ChlN subunits. [4Fe-4S] cluster serves as cofactor.

The enzyme catalyses chlorophyllide a + oxidized 2[4Fe-4S]-[ferredoxin] + 2 ADP + 2 phosphate = protochlorophyllide a + reduced 2[4Fe-4S]-[ferredoxin] + 2 ATP + 2 H2O. The protein operates within porphyrin-containing compound metabolism; chlorophyll biosynthesis (light-independent). Its function is as follows. Component of the dark-operative protochlorophyllide reductase (DPOR) that uses Mg-ATP and reduced ferredoxin to reduce ring D of protochlorophyllide (Pchlide) to form chlorophyllide a (Chlide). This reaction is light-independent. The NB-protein (ChlN-ChlB) is the catalytic component of the complex. This chain is Light-independent protochlorophyllide reductase subunit B, found in Prochlorococcus marinus (strain MIT 9515).